Here is a 433-residue protein sequence, read N- to C-terminus: Eukaryotic peptide chain release factor subunit 1 (433 aa).

Gln182 is modified (N5-methylglutamine). Ser425 bears the Phosphoserine mark.

Belongs to the eukaryotic release factor 1 family. As to quaternary structure, component of the eRF1-eRF3-GTP ternary complex, composed of sup45/eRF1, sup35/eRF3 and GTP.

The protein localises to the cytoplasm. Component of the eRF1-eRF3-GTP ternary complex, a ternary complex that mediates translation termination in response to the termination codons. The eRF1-eRF3-GTP complex binds to a stop codon in the ribosomal A-site. Sup45/eRF1 is responsible for stop codon recognition and inducing hydrolysis of peptidyl-tRNA. Following GTP hydrolysis by sup35/eRF3, sup35/eRF3 dissociates, permitting sup45/eRF1 to accommodate fully in the A-site. The polypeptide is Eukaryotic peptide chain release factor subunit 1 (sup45) (Schizosaccharomyces pombe (strain 972 / ATCC 24843) (Fission yeast)).